We begin with the raw amino-acid sequence, 590 residues long: UvrABC system protein C (590 aa).

The GIY-YIG domain maps to 14–91; sequence DQPGCYLMKD…IKKYDPKYNV (78 aa). One can recognise a UVR domain in the interval 196–231; that stretch reads NEVKKELEAKMLEASENLQFERAKEFRDQIAHIEST.

Belongs to the UvrC family. Interacts with UvrB in an incision complex.

It localises to the cytoplasm. Its function is as follows. The UvrABC repair system catalyzes the recognition and processing of DNA lesions. UvrC both incises the 5' and 3' sides of the lesion. The N-terminal half is responsible for the 3' incision and the C-terminal half is responsible for the 5' incision. In Bacillus licheniformis (strain ATCC 14580 / DSM 13 / JCM 2505 / CCUG 7422 / NBRC 12200 / NCIMB 9375 / NCTC 10341 / NRRL NRS-1264 / Gibson 46), this protein is UvrABC system protein C.